The primary structure comprises 891 residues: DNA mismatch repair protein MutS (891 aa).

643–650 (GPNMGGKS) is a binding site for ATP.

It belongs to the DNA mismatch repair MutS family.

Its function is as follows. This protein is involved in the repair of mismatches in DNA. It is possible that it carries out the mismatch recognition step. This protein has a weak ATPase activity. This is DNA mismatch repair protein MutS from Xanthomonas campestris pv. campestris (strain ATCC 33913 / DSM 3586 / NCPPB 528 / LMG 568 / P 25).